The sequence spans 303 residues: Lipoyl synthase (303 aa).

[4Fe-4S] cluster is bound by residues Cys34, Cys39, Cys45, Cys60, Cys64, Cys67, and Ser273. Residues 46–262 (WSKKHATVMI…ERVARTKGFL (217 aa)) form the Radical SAM core domain.

Belongs to the radical SAM superfamily. Lipoyl synthase family. It depends on [4Fe-4S] cluster as a cofactor.

The protein localises to the cytoplasm. It catalyses the reaction [[Fe-S] cluster scaffold protein carrying a second [4Fe-4S](2+) cluster] + N(6)-octanoyl-L-lysyl-[protein] + 2 oxidized [2Fe-2S]-[ferredoxin] + 2 S-adenosyl-L-methionine + 4 H(+) = [[Fe-S] cluster scaffold protein] + N(6)-[(R)-dihydrolipoyl]-L-lysyl-[protein] + 4 Fe(3+) + 2 hydrogen sulfide + 2 5'-deoxyadenosine + 2 L-methionine + 2 reduced [2Fe-2S]-[ferredoxin]. It functions in the pathway protein modification; protein lipoylation via endogenous pathway; protein N(6)-(lipoyl)lysine from octanoyl-[acyl-carrier-protein]: step 2/2. Functionally, catalyzes the radical-mediated insertion of two sulfur atoms into the C-6 and C-8 positions of the octanoyl moiety bound to the lipoyl domains of lipoate-dependent enzymes, thereby converting the octanoylated domains into lipoylated derivatives. The sequence is that of Lipoyl synthase from Rickettsia bellii (strain OSU 85-389).